Reading from the N-terminus, the 1107-residue chain is Voltage-gated delayed rectifier potassium channel KCNH8 (1107 aa).

Topologically, residues 1-225 (MPVMKGLLAP…HFSTFKAGWD (225 aa)) are cytoplasmic. The PAS domain occupies 18–90 (IATRFDGTHS…LQIEKSLEEK (73 aa)). In terms of domain architecture, PAC spans 93-145 (FKGEIMFYKKNGSPFWCLLDIVPIKNEKGDVVLFLASFKDITDTKVKITPEDK). A helical transmembrane segment spans residues 226–246 (WLILLATFYVAVTVPYNVCFI). Residues 247–255 (GNDDLSTTR) lie on the Extracellular side of the membrane. The helical transmembrane segment at 256–276 (STTVSDIAVEILFIIDIILNF) threads the bilayer. Residues 277–298 (RTTYVSKSGQVIFEARSICIHY) lie on the Cytoplasmic side of the membrane. Residues 299–319 (VTTWFIIDLIAALPFDLLYAF) form a helical membrane-spanning segment. Residue asparagine 320 is glycosylated (N-linked (GlcNAc...) asparagine). Topologically, residues 320–327 (NVTVVSLV) are extracellular. Residues 328–348 (HLLKTVRLLRLLRLLQKLDRY) traverse the membrane as a helical; Voltage-sensor segment. At 349–357 (SQHSTIVLT) the chain is on the cytoplasmic side. The chain crosses the membrane as a helical span at residues 358 to 378 (LLMSMFALLAHWMACIWYVIG). Residues 379 to 419 (KMEREDNSLLKWEVGWLHELGKRLESPYYGNNTLGGPSIRS) are Extracellular-facing. Asparagine 409 carries N-linked (GlcNAc...) asparagine glycosylation. Residues 420–440 (AYIAALYFTLSSLTSVGFGNV) constitute an intramembrane region (pore-forming). The Selectivity filter motif lies at 434 to 439 (SVGFGN). The Extracellular portion of the chain corresponds to 441-448 (SANTDAEK). A helical membrane pass occupies residues 449–469 (IFSICTMLIGALMHALVFGNV). Residues 470-1107 (TAIIQRMYSR…EVKDNKAINV (638 aa)) lie on the Cytoplasmic side of the membrane. The segment at 551-668 (LFECASRGCL…HKFVEDIQHD (118 aa)) is cNMP-binding domain. Residues 686 to 702 (SNKSMVSQSEPKGNGNI) show a composition bias toward polar residues. Disordered stretches follow at residues 686–742 (SNKS…NKKV), 764–791 (HSPI…KRKE), 818–847 (EDGN…PPLG), and 961–989 (VDPS…YHSP). Over residues 710 to 724 (VEDEEEEEEGEEEEA) the composition is skewed to acidic residues. Polar residues predominate over residues 961 to 972 (VDPSSVGSSPQR).

Belongs to the potassium channel family. H (Eag) (TC 1.A.1.20) subfamily. Kv12.1/KCNH8 sub-subfamily. In terms of assembly, the potassium channel is probably composed of a homo- or heterotetrameric complex of pore-forming alpha subunits that can associate with modulating beta subunits. As to expression, primarily expressed in the nervous system.

The protein localises to the membrane. It catalyses the reaction K(+)(in) = K(+)(out). In terms of biological role, pore-forming (alpha) subunit of a voltage-gated delayed rectifier potassium channel that mediates outward-rectifying potassium currents. Elicits a slowly activating, non-inactivating and slowly deactivation outwards potassium current at depolarizating voltages from -30 mV to +50mV. Shows no obvious change in the activation rate from different holding potentials. Activation is strongly dependent on the pH of the external solution. The polypeptide is Voltage-gated delayed rectifier potassium channel KCNH8 (Homo sapiens (Human)).